A 333-amino-acid chain; its full sequence is Receptor polysaccharide phosphotransferase WefC (333 aa).

It belongs to the stealth family.

Functionally, part of the type 2Gn receptor polysaccharide (RPS) biosynthesis locus. Essential for cell surface RPS production, and for synthesis of the host-like GalNAc beta 1-3Gal (Gn) motif of the RPS. Probably encodes a 1-3Gal alpha transferase. The chain is Receptor polysaccharide phosphotransferase WefC (wefC) from Streptococcus gordonii.